The following is a 117-amino-acid chain: Small ribosomal subunit protein bS6 (117 aa).

The protein belongs to the bacterial ribosomal protein bS6 family.

Its function is as follows. Binds together with bS18 to 16S ribosomal RNA. This is Small ribosomal subunit protein bS6 from Porphyromonas gingivalis (strain ATCC BAA-308 / W83).